The sequence spans 460 residues: Nucleosome assembly protein 1-like 2 (460 aa).

Basic and acidic residues-rich tracts occupy residues 1–11 (MAESENRKELS) and 27–36 (LGEHLERGED). 2 disordered regions span residues 1–88 (MAES…ADRP) and 214–238 (EEEE…EDPK). The span at 214–236 (EEEEEEEEDDIEATGEENKEEED) shows a compositional bias: acidic residues. The Nuclear localization signal motif lies at 346–352 (IKKKQKH).

Belongs to the nucleosome assembly protein (NAP) family.

It localises to the nucleus. Acidic protein which may be involved in interactions with other proteins or DNA. This Homo sapiens (Human) protein is Nucleosome assembly protein 1-like 2 (NAP1L2).